A 312-amino-acid chain; its full sequence is Taste receptor type 2 member 103 (312 aa).

Residues 1-6 (MVLTIR) are Extracellular-facing. A helical membrane pass occupies residues 7-27 (AILWVTLITIISLEFIIGILG). At 28-61 (NVFIALVNIIDWVKRGKISAVDKTYMALAISRTA) the chain is on the cytoplasmic side. The helical transmembrane segment at 62–82 (FLLSLITGFLVSLLDPALLGM) threads the bilayer. Topologically, residues 83-92 (RTMVRLLTIS) are extracellular. A helical membrane pass occupies residues 93-113 (WMVTNHFSVWFATCLSIFYFL). The Cytoplasmic segment spans residues 114-132 (KIANFSNSIFLVLKWEAKK). The chain crosses the membrane as a helical span at residues 133–153 (VVSVTLVVSVIILIMNIIVIN). Residues 154-185 (KFTDRLQVNTLQNCSTSNTLKDYGLFLFISTG) lie on the Extracellular side of the membrane. An N-linked (GlcNAc...) asparagine glycan is attached at Asn166. The helical transmembrane segment at 186–206 (FTLTPFAVSLTMFLLLIFSLW) threads the bilayer. The Cytoplasmic segment spans residues 207-229 (RHLKNMCHSATGSRDVSTVAHIK). Residues 230-250 (GLQTVVTFLLLYTAFVMSLLS) form a helical membrane-spanning segment. Residues 251-264 (ESLNINIQHTNLLS) lie on the Extracellular side of the membrane. Residues 265–285 (HFLRSIGVAFPTGHSCVLILG) form a helical membrane-spanning segment. Residues 286 to 312 (NSKLRQASLSVILWLRYKYKHIENWGP) are Cytoplasmic-facing.

This sequence belongs to the G-protein coupled receptor T2R family. In terms of tissue distribution, expressed in subsets of taste receptor cells of the tongue and palate epithelium and exclusively in gustducin-positive cells. Expressed in 15% taste bud cells in circumvallate and foliate papillae but only in 2% in fungiform papillae.

The protein localises to the membrane. In terms of biological role, gustducin-coupled receptor implicated in the perception of bitter compounds in the oral cavity and the gastrointestinal tract. Signals through PLCB2 and the calcium-regulated cation channel TRPM5. This chain is Taste receptor type 2 member 103 (Tas2r103), found in Mus musculus (Mouse).